The following is a 494-amino-acid chain: Gabija protein GajB (494 aa).

The 229-residue stretch at 1-229 folds into the UvrD-like helicase ATP-binding domain; sequence MSREQIIKDG…YHLTSNFRCC (229 aa). ATP is bound at residue 17 to 24; it reads AGAGSGKT.

The protein belongs to the helicase family. As to quaternary structure, homodimer. Interacts with GajA; 2 GajB dimers dock at opposite sides of the GajA complex to form a 4:4 GajA-GajB assembly (GajAB). GajAB interacts with Bacillus phage Phi3T Gad1 protein; this interaction forms a 4:4:8 GajAB-Gad1 complex and leads to GajAB inhibition.

Functionally, component of antiviral defense system Gabija type I, composed of GajA and GajB. Expression of Gabija type I in B.subtilis (strain BEST7003) confers resistance to phages phi105, phi29, rho14, SpBeta and SBSphiC. Expression of Gabija type I in E.coli B (strain ATCC 11303) confers resistance to phage T7. May be a helicase or contribute to GajA activation. This chain is Gabija protein GajB, found in Bacillus cereus (strain VD045).